Consider the following 155-residue polypeptide: Endoribonuclease YbeY (155 aa).

3 residues coordinate Zn(2+): His110, His114, and His120.

It belongs to the endoribonuclease YbeY family. Requires Zn(2+) as cofactor.

Its subcellular location is the cytoplasm. In terms of biological role, single strand-specific metallo-endoribonuclease involved in late-stage 70S ribosome quality control and in maturation of the 3' terminus of the 16S rRNA. This is Endoribonuclease YbeY from Deinococcus radiodurans (strain ATCC 13939 / DSM 20539 / JCM 16871 / CCUG 27074 / LMG 4051 / NBRC 15346 / NCIMB 9279 / VKM B-1422 / R1).